Consider the following 245-residue polypeptide: 1-(5-phosphoribosyl)-5-[(5-phosphoribosylamino)methylideneamino] imidazole-4-carboxamide isomerase (245 aa).

Aspartate 15 serves as the catalytic Proton acceptor. Aspartate 135 acts as the Proton donor in catalysis.

The protein belongs to the HisA/HisF family.

Its subcellular location is the cytoplasm. The catalysed reaction is 1-(5-phospho-beta-D-ribosyl)-5-[(5-phospho-beta-D-ribosylamino)methylideneamino]imidazole-4-carboxamide = 5-[(5-phospho-1-deoxy-D-ribulos-1-ylimino)methylamino]-1-(5-phospho-beta-D-ribosyl)imidazole-4-carboxamide. The protein operates within amino-acid biosynthesis; L-histidine biosynthesis; L-histidine from 5-phospho-alpha-D-ribose 1-diphosphate: step 4/9. The protein is 1-(5-phosphoribosyl)-5-[(5-phosphoribosylamino)methylideneamino] imidazole-4-carboxamide isomerase of Haloquadratum walsbyi (strain DSM 16790 / HBSQ001).